Reading from the N-terminus, the 275-residue chain is Hydroxyethylthiazole kinase (275 aa).

Methionine 50 contacts substrate. The ATP site is built by arginine 126 and serine 171. Substrate is bound at residue alanine 200.

This sequence belongs to the Thz kinase family. The cofactor is Mg(2+).

The catalysed reaction is 5-(2-hydroxyethyl)-4-methylthiazole + ATP = 4-methyl-5-(2-phosphooxyethyl)-thiazole + ADP + H(+). It participates in cofactor biosynthesis; thiamine diphosphate biosynthesis; 4-methyl-5-(2-phosphoethyl)-thiazole from 5-(2-hydroxyethyl)-4-methylthiazole: step 1/1. Catalyzes the phosphorylation of the hydroxyl group of 4-methyl-5-beta-hydroxyethylthiazole (THZ). This Acinetobacter baumannii (strain ATCC 17978 / DSM 105126 / CIP 53.77 / LMG 1025 / NCDC KC755 / 5377) protein is Hydroxyethylthiazole kinase.